Reading from the N-terminus, the 446-residue chain is Tubulin beta-8 chain (446 aa).

8 residues coordinate GTP: Gln-11, Glu-69, Ser-138, Gly-142, Thr-143, Gly-144, Asn-204, and Asn-226. Glu-69 is a binding site for Mg(2+). Residues 426-446 are disordered; it reads QDATAEDDYDEDDDAAAADEA. Over residues 429-446 the composition is skewed to acidic residues; the sequence is TAEDDYDEDDDAAAADEA.

It belongs to the tubulin family. In terms of assembly, dimer of alpha and beta chains. A typical microtubule is a hollow water-filled tube with an outer diameter of 25 nm and an inner diameter of 15 nM. Alpha-beta heterodimers associate head-to-tail to form protofilaments running lengthwise along the microtubule wall with the beta-tubulin subunit facing the microtubule plus end conferring a structural polarity. Microtubules usually have 13 protofilaments but different protofilament numbers can be found in some organisms and specialized cells. The cofactor is Mg(2+). As to expression, expressed in anthers.

It localises to the cytoplasm. The protein resides in the cytoskeleton. Its function is as follows. Tubulin is the major constituent of microtubules, a cylinder consisting of laterally associated linear protofilaments composed of alpha- and beta-tubulin heterodimers. Microtubules grow by the addition of GTP-tubulin dimers to the microtubule end, where a stabilizing cap forms. Below the cap, tubulin dimers are in GDP-bound state, owing to GTPase activity of alpha-tubulin. This chain is Tubulin beta-8 chain (TUBB8), found in Oryza sativa subsp. japonica (Rice).